Here is a 228-residue protein sequence, read N- to C-terminus: Translin (228 aa).

The interval 86-90 is DNA/RNA binding; sequence RFHEH. The segment at 177 to 198 is leucine-zipper; sequence LDSGFRLLNLKNDSLRKRYDGL. K187 bears the N6-acetyllysine mark. S190 carries the post-translational modification Phosphoserine. The residue at position 199 (K199) is an N6-acetyllysine.

The protein belongs to the translin family. Ring-shaped heterooctamer of six TSN and two TSNAX subunits, DNA/RNA binding occurs inside the ring.

The protein resides in the cytoplasm. It localises to the nucleus. DNA-binding protein that specifically recognizes consensus sequences at the breakpoint junctions in chromosomal translocations, mostly involving immunoglobulin (Ig)/T-cell receptor gene segments. Seems to recognize single-stranded DNA ends generated by staggered breaks occurring at recombination hot spots. In terms of biological role, exhibits both single-stranded and double-stranded endoribonuclease activity. May act as an activator of RNA-induced silencing complex (RISC) by facilitating endonucleolytic cleavage of the siRNA passenger strand. This chain is Translin (Tsn), found in Mus musculus (Mouse).